The chain runs to 380 residues: Ceramide synthase 2 (380 aa).

Topologically, residues 1–40 are lumenal; the sequence is MLQTLYDYFWWERLWLPVNLTWADLEDRDGRVYAKASDLY. A glycan (N-linked (GlcNAc...) asparagine) is linked at asparagine 19. The chain crosses the membrane as a helical span at residues 41–61; that stretch reads ITLPLALLFLIVRYFFELYVA. A homeobox-like region spans residues 67–128; it reads LLNIKEKTRL…RRRRNQDRPS (62 aa). Residues 131–332 enclose the TLC domain; it reads KKFREASWRF…ILRMAHKFIT (202 aa). The next 4 membrane-spanning stretches (helical) occupy residues 140-160, 181-201, 209-229, and 264-284; these read FTFYLIAFIAGMAVIVDKPWF, WYYMIELSFYWSLLFSIASDV, QIIHHVATIILISFSWFANYI, and IFIVFAIVFIITRLVILPFWI. Residues 291–300 carry the Last loop motif motif; sequence YPLELYPAFF. Residues 304–324 traverse the membrane as a helical segment; sequence FFNSMMGVLQLLHIFWAYLIL. Topologically, residues 325-380 are cytoplasmic; that stretch reads RMAHKFITGKLVEDERSDREETESSEGEEAAAGGGAKSRPLANGHPILNNNHRKND. The disordered stretch occupies residues 338-380; sequence DERSDREETESSEGEEAAAGGGAKSRPLANGHPILNNNHRKND. Residue serine 341 is modified to Phosphoserine. A compositionally biased stretch (acidic residues) spans 344–353; that stretch reads EETESSEGEE. The residue at position 346 (threonine 346) is a Phosphothreonine. 2 positions are modified to phosphoserine: serine 348 and serine 349.

Interacts with ATP6V0C, ASGR1, ASGR2 and SLC22A1/OCT1. Interacts with ELOV1, HSD17B12 and TECR. Interacts with NDUFS2. Interacts with PAQR4; the interaction regulates the stability and activity of CERS2 and is inhibited in presence of ceramides. Acetylated. Deacetylation by SIRT3 increases enzyme activity and promotes mitochondrial ceramide accumulation. In terms of processing, phosphorylated at the C-terminus by CK2, leading to increase the ceramide synthase activity. In terms of tissue distribution, expressed in kidney, liver, brain, heart, placenta and lung.

Its subcellular location is the endoplasmic reticulum membrane. The catalysed reaction is a very long-chain fatty acyl-CoA + a sphingoid base = an N-(very-long-chain fatty acyl)-sphingoid base + CoA + H(+). It catalyses the reaction docosanoyl-CoA + sphinganine = N-docosanoylsphinganine + CoA + H(+). The enzyme catalyses tetracosanoyl-CoA + sphinganine = N-tetracosanoylsphinganine + CoA + H(+). It carries out the reaction hexacosanoyl-CoA + sphinganine = N-hexacosanoylsphinganine + CoA + H(+). The catalysed reaction is (15Z)-tetracosenoyl-CoA + sphinganine = N-(15Z-tetracosenoyl)-sphinganine + CoA + H(+). It catalyses the reaction 2-hydroxytetracosanoyl-CoA + sphinganine = N-(2-hydroxytetracosanoyl)-sphinganine + CoA + H(+). The enzyme catalyses 2-hydroxydocosanoyl-CoA + sphinganine = N-(2-hydroxydocosanoyl)-sphinganine + CoA + H(+). It carries out the reaction 2-hydroxytetracosenoyl-CoA + sphinganine = N-(2-hydroxytetracosenoyl)-sphinganine + CoA + H(+). The catalysed reaction is tetracosenoyl-CoA + sphinganine = an N-tetracosenoylsphinganine + CoA + H(+). It catalyses the reaction hexacosenoyl-CoA + sphinganine = N-hexacosenoylsphinganine + CoA + H(+). The enzyme catalyses tetracosanoyl-CoA + sphing-4-enine = N-tetracosanoyl-sphing-4-enine + CoA + H(+). It carries out the reaction tetracosenoyl-CoA + sphing-4-enine = N-(tetracosenoyl)-sphing-4-enine + CoA + H(+). The catalysed reaction is heptadecasphing-4-enine + tetracosanoyl-CoA = N-tetracosanoyl-heptadecasphing-4-enine + CoA + H(+). It catalyses the reaction a fatty acyl-CoA + sphing-4-enine = an N-acylsphing-4-enine + CoA + H(+). The enzyme catalyses sphing-4-enine + hexadecanoyl-CoA = N-hexadecanoylsphing-4-enine + CoA + H(+). It carries out the reaction sphing-4-enine + octadecanoyl-CoA = N-octadecanoylsphing-4-enine + CoA + H(+). The catalysed reaction is eicosanoyl-CoA + sphing-4-enine = N-eicosanoyl-sphing-4-enine + CoA + H(+). It catalyses the reaction sphinganine + hexadecanoyl-CoA = N-hexadecanoylsphinganine + CoA + H(+). The enzyme catalyses sphinganine + octadecanoyl-CoA = N-(octadecanoyl)-sphinganine + CoA + H(+). It carries out the reaction sphinganine + (9Z)-octadecenoyl-CoA = N-(9Z-octadecenoyl)-sphinganine + CoA + H(+). The catalysed reaction is eicosanoyl-CoA + sphinganine = N-eicosanoylsphinganine + CoA + H(+). It functions in the pathway lipid metabolism; sphingolipid metabolism. Ceramide synthase activity is inhibited by sphingosine-1-phosphate. In terms of biological role, ceramide synthase that catalyzes the transfer of the acyl chain from acyl-CoA to a sphingoid base, with high selectivity toward very-long-chain fatty acyl-CoA (chain length C22-C27). N-acylates sphinganine and sphingosine bases to form dihydroceramides and ceramides in de novo synthesis and salvage pathways, respectively. Plays a non-redundant role in the synthesis of ceramides with very-long-chain fatty acids in kidney, liver and brain. Regulates the abundance of myelin-specific sphingolipids galactosylceramide and sulfatide that affects myelin sheath architecture and motor neuron functions. This Homo sapiens (Human) protein is Ceramide synthase 2.